The sequence spans 141 residues: Nucleoside diphosphate kinase (141 aa).

Lys11, Phe59, Arg87, Thr93, Arg104, and Asn114 together coordinate ATP. The Pros-phosphohistidine intermediate role is filled by His117.

It belongs to the NDK family. Homotetramer. Mg(2+) serves as cofactor.

It localises to the cytoplasm. The catalysed reaction is a 2'-deoxyribonucleoside 5'-diphosphate + ATP = a 2'-deoxyribonucleoside 5'-triphosphate + ADP. The enzyme catalyses a ribonucleoside 5'-diphosphate + ATP = a ribonucleoside 5'-triphosphate + ADP. Its function is as follows. Major role in the synthesis of nucleoside triphosphates other than ATP. The ATP gamma phosphate is transferred to the NDP beta phosphate via a ping-pong mechanism, using a phosphorylated active-site intermediate. In Serratia proteamaculans (strain 568), this protein is Nucleoside diphosphate kinase.